An 809-amino-acid chain; its full sequence is Phenylalanine--tRNA ligase beta subunit (809 aa).

Residues 39–152 (KDKWPNVYVG…ADALVGMLAS (114 aa)) enclose the tRNA-binding domain. Residues 404-492 (KERNGIVLSL…RIAGYHTIPC (89 aa)) form the B5 domain. Residues Asp470, Asp476, Glu479, and Glu480 each coordinate Mg(2+). One can recognise an FDX-ACB domain in the interval 717–808 (NRFPAVERDL…LNTETGAVLR (92 aa)).

It belongs to the phenylalanyl-tRNA synthetase beta subunit family. Type 1 subfamily. Tetramer of two alpha and two beta subunits. The cofactor is Mg(2+).

It is found in the cytoplasm. The enzyme catalyses tRNA(Phe) + L-phenylalanine + ATP = L-phenylalanyl-tRNA(Phe) + AMP + diphosphate + H(+). This Dehalococcoides mccartyi (strain CBDB1) protein is Phenylalanine--tRNA ligase beta subunit.